The sequence spans 287 residues: 4-hydroxybenzoate octaprenyltransferase (287 aa).

Helical transmembrane passes span 23 to 43 (IGSL…GGTA), 46 to 66 (GKLL…GCVI), 99 to 119 (LFVL…AMTI), 141 to 161 (LPQV…YAAV), 162 to 182 (GESL…WTVA), 213 to 233 (LVIG…GDLN), 237 to 257 (GAYY…QQLI), and 266 to 286 (FRAF…ILLA).

This sequence belongs to the UbiA prenyltransferase family. The cofactor is Mg(2+).

The protein resides in the cell inner membrane. It carries out the reaction all-trans-octaprenyl diphosphate + 4-hydroxybenzoate = 4-hydroxy-3-(all-trans-octaprenyl)benzoate + diphosphate. It participates in cofactor biosynthesis; ubiquinone biosynthesis. Its function is as follows. Catalyzes the prenylation of para-hydroxybenzoate (PHB) with an all-trans polyprenyl group. Mediates the second step in the final reaction sequence of ubiquinone-8 (UQ-8) biosynthesis, which is the condensation of the polyisoprenoid side chain with PHB, generating the first membrane-bound Q intermediate 3-octaprenyl-4-hydroxybenzoate. This Edwardsiella ictaluri (strain 93-146) protein is 4-hydroxybenzoate octaprenyltransferase.